Reading from the N-terminus, the 105-residue chain is Large ribosomal subunit protein bL21 (105 aa).

This sequence belongs to the bacterial ribosomal protein bL21 family. As to quaternary structure, part of the 50S ribosomal subunit. Contacts protein L20.

In terms of biological role, this protein binds to 23S rRNA in the presence of protein L20. In Rickettsia prowazekii (strain Madrid E), this protein is Large ribosomal subunit protein bL21.